A 259-amino-acid polypeptide reads, in one-letter code: Tegument protein UL51 homolog (259 aa).

A lipid anchor (S-palmitoyl cysteine; by host) is attached at C9.

Belongs to the herpesviridae UL51 family. In terms of assembly, oligomerizes. Interacts with ORF53; this interaction mediates ORF53 incorporation to virions. Phosphorylated. In terms of processing, palmitoylation is necessary for Golgi localization.

The protein resides in the virion tegument. Its subcellular location is the host cytoplasm. It is found in the host Golgi apparatus. Functionally, plays several roles during the time course of infection, including egress of virus particles from the perinuclear space and secondary envelopment of cytoplasmic capsids that bud into specific trans-Golgi network (TGN)-derived membranes. This chain is Tegument protein UL51 homolog, found in Varicella-zoster virus (strain Dumas) (HHV-3).